We begin with the raw amino-acid sequence, 164 residues long: MNISIIVAMSQNLVIGQKNSIPWNIPKDLSWFKKHTIKKSIIMGRKTWESIGRVLPMRQNIVLTRQKNIKNTNVLFVNSISKAIQSALYKNEIMIIGGSNLYNQMLTSANKLYITHIEKYILGDTYFPTYDHLPWKIIFKKKIIEHEKTKNSFYVTFKILKKIT.

Positions 2 to 162 (NISIIVAMSQ…FYVTFKILKK (161 aa)) constitute a DHFR domain. 6–8 (IVA) is a substrate binding site. NADP(+) is bound by residues 7–8 (VA) and 15–20 (IGQKNS). Asp28 serves as a coordination point for substrate. Residue 44–47 (GRKT) participates in NADP(+) binding. Residue Arg58 participates in substrate binding. NADP(+)-binding positions include 63-66 (LTRQ) and 96-101 (IGGSNL). Thr115 provides a ligand contact to substrate.

It belongs to the dihydrofolate reductase family.

It carries out the reaction (6S)-5,6,7,8-tetrahydrofolate + NADP(+) = 7,8-dihydrofolate + NADPH + H(+). It participates in cofactor biosynthesis; tetrahydrofolate biosynthesis; 5,6,7,8-tetrahydrofolate from 7,8-dihydrofolate: step 1/1. In terms of biological role, key enzyme in folate metabolism. Catalyzes an essential reaction for de novo glycine and purine synthesis, and for DNA precursor synthesis. The polypeptide is Dihydrofolate reductase (folA) (Buchnera aphidicola subsp. Baizongia pistaciae (strain Bp)).